The chain runs to 317 residues: MFVFIAKLLIFSSVITSAFTCYQCFIDENDSRRLCLGHILTEYNVRNVDSCYKTLDRIFNNEEKVIEAGKVGRGYDLTLKNILMAEIMPIVEEFDQQLNYDTEYESRLQAAANNFIAAASSLPRVSGCLPPCGFQVQGAVYNCVTCQYDSCEFPLDCPGKEITVQENNRTQMWCSVPFLLPADVEIVWRYAQDRTMLRERFDDVTVGVDPLYSIPSARPEQSGTYQCEVLSQEQSLVRLYFYLTVVPVAQTYHVHLQDLCAQALRPEPQFPPSFSFWLPRPALLITCLTATMLLIFLSLGAMCRLWYQIRTNVSNPA.

The N-terminal stretch at 1-18 (MFVFIAKLLIFSSVITSA) is a signal peptide. The Extracellular segment spans residues 19 to 281 (FTCYQCFIDE…PSFSFWLPRP (263 aa)). 5 cysteine pairs are disulfide-bonded: Cys-21–Cys-143, Cys-24–Cys-146, Cys-35–Cys-51, Cys-128–Cys-151, and Cys-132–Cys-157. An N-linked (GlcNAc...) asparagine glycan is attached at Asn-29. Positions 123–237 (PRVSGCLPPC…EVLSQEQSLV (115 aa)) constitute an Ig-like domain. The N-linked (GlcNAc...) asparagine glycan is linked to Asn-168. The cysteines at positions 174 and 227 are disulfide-linked. The chain crosses the membrane as a helical span at residues 282–302 (ALLITCLTATMLLIFLSLGAM). The Cytoplasmic portion of the chain corresponds to 303-317 (CRLWYQIRTNVSNPA).

The protein belongs to the SPACA6 family. Forms a complex with izumo1 and tmem81 on spermatocyte cell membrane. The complex binds to oocyte protein bncr. As to expression, expressed in testis.

The protein resides in the cytoplasmic vesicle. It is found in the secretory vesicle. Its subcellular location is the acrosome membrane. Its function is as follows. Sperm protein required for fusion of sperm with the egg membrane during fertilization. May regulate the expression of sperm surface protein DCST2. In Danio rerio (Zebrafish), this protein is Sperm acrosome membrane-associated protein 6.